The sequence spans 378 residues: MTQSIMRYKDFFSEKTQFANFKTPLTLEFGGTLPEYRVAYRSWGKLNKSGDNAILICHALTGSADADIWWAPLFGEGKTFDETKDFIVCSNVLGSCYGTTGPASINPETGKRFGPDFPSFTIRDMVRVQRSLLNALGVKKLKMVIGGSLGGMQALEWCAMYPDFVETQVTIASSGKHSAWCIGLSEAQRQAICADENWNGGHYTPENPPKNGLSAARMIAMCTYRTRASFETRFARSLRAKETFNVESYLLYQGEKLVERFDANAYVKLTQAMDKHDLSRNRGDYYNVLKSIDIPSLIVAINSDILYPQEEQEELVRFMPNAQFGMLYSQHGHDTFLIEMEALNKLVMAFQKQLPPEGKFLNDRSPIVSTIFGSKLGV.

The region spanning 52-337 (NAILICHALT…YSQHGHDTFL (286 aa)) is the AB hydrolase-1 domain. Ser-148 (nucleophile) is an active-site residue. Substrate is bound at residue Arg-217. Active-site residues include Asp-304 and His-333. Asp-334 contacts substrate.

Belongs to the AB hydrolase superfamily. MetX family. As to quaternary structure, homodimer.

The protein localises to the cytoplasm. The enzyme catalyses L-homoserine + acetyl-CoA = O-acetyl-L-homoserine + CoA. Its pathway is amino-acid biosynthesis; L-methionine biosynthesis via de novo pathway; O-acetyl-L-homoserine from L-homoserine: step 1/1. Transfers an acetyl group from acetyl-CoA to L-homoserine, forming acetyl-L-homoserine. The protein is Homoserine O-acetyltransferase of Chloroherpeton thalassium (strain ATCC 35110 / GB-78).